The chain runs to 701 residues: DNA ligase (701 aa).

The disordered stretch occupies residues 1–21 (MSAKSTPDAGPQEQATEAEAE). Residues 50 to 54 (DADFD), 100 to 101 (SL), and glutamate 130 each bind NAD(+). The N6-AMP-lysine intermediate role is filled by lysine 132. Residues arginine 153, glutamate 193, lysine 309, and lysine 333 each coordinate NAD(+). Residues cysteine 427, cysteine 430, cysteine 446, and cysteine 452 each coordinate Zn(2+). In terms of domain architecture, BRCT spans 616–701 (SIARTLEGLS…LENGPQAPEG (86 aa)).

This sequence belongs to the NAD-dependent DNA ligase family. LigA subfamily. Mg(2+) is required as a cofactor. Requires Mn(2+) as cofactor.

The catalysed reaction is NAD(+) + (deoxyribonucleotide)n-3'-hydroxyl + 5'-phospho-(deoxyribonucleotide)m = (deoxyribonucleotide)n+m + AMP + beta-nicotinamide D-nucleotide.. DNA ligase that catalyzes the formation of phosphodiester linkages between 5'-phosphoryl and 3'-hydroxyl groups in double-stranded DNA using NAD as a coenzyme and as the energy source for the reaction. It is essential for DNA replication and repair of damaged DNA. This is DNA ligase from Mycobacterium sp. (strain KMS).